A 642-amino-acid chain; its full sequence is Threonine--tRNA ligase (642 aa).

The TGS domain occupies 1–61 (MPVITLPDGS…ENDATLSIIT (61 aa)). Positions 243–534 (DHRKIGKQLD…LTEEFAGFFP (292 aa)) are catalytic. Zn(2+) is bound by residues cysteine 334, histidine 385, and histidine 511.

This sequence belongs to the class-II aminoacyl-tRNA synthetase family. In terms of assembly, homodimer. Requires Zn(2+) as cofactor.

It localises to the cytoplasm. The catalysed reaction is tRNA(Thr) + L-threonine + ATP = L-threonyl-tRNA(Thr) + AMP + diphosphate + H(+). Catalyzes the attachment of threonine to tRNA(Thr) in a two-step reaction: L-threonine is first activated by ATP to form Thr-AMP and then transferred to the acceptor end of tRNA(Thr). Also edits incorrectly charged L-seryl-tRNA(Thr). In Salmonella paratyphi A (strain ATCC 9150 / SARB42), this protein is Threonine--tRNA ligase.